The primary structure comprises 965 residues: Vacuolar protein sorting-associated protein 54 (965 aa).

At S8 the chain carries Phosphoserine. A coiled-coil region spans residues 228–249; that stretch reads ELQDYLKKTSQAVKMLRDKIAQ. A disordered region spans residues 516–558; it reads ASAAVDTTSQRNTSPHSEPCSSDSVSEPECTTDSSSSKEQTPA. The span at 520–558 shows a compositional bias: polar residues; that stretch reads VDTTSQRNTSPHSEPCSSDSVSEPECTTDSSSSKEQTPA.

The protein belongs to the VPS54 family. In terms of assembly, component of the Golgi-associated retrograde protein (GARP) complex, also called VFT (VPS fifty-three) complex, composed of VPS51, VPS52, VPS53 and VPS54. EIPR1 interacts with GARP complex and mediates its recruitment to the trans-Golgi network. Interacts with VPS51 in an EIPR1-independent manner. Ubiquitously expressed at low level.

It is found in the golgi apparatus. The protein resides in the trans-Golgi network. The protein localises to the membrane. In terms of biological role, acts as a component of the GARP complex that is involved in retrograde transport from early and late endosomes to the trans-Golgi network (TGN). The GARP complex is required for the maintenance of the cycling of mannose 6-phosphate receptors between the TGN and endosomes, this cycling is necessary for proper lysosomal sorting of acid hydrolases such as CTSD. Within the GARP complex, required to tether the complex to the TGN. Not involved in endocytic recycling. In Rattus norvegicus (Rat), this protein is Vacuolar protein sorting-associated protein 54 (Vps54).